A 100-amino-acid chain; its full sequence is Aspartyl/glutamyl-tRNA(Asn/Gln) amidotransferase subunit C (100 aa).

It belongs to the GatC family. In terms of assembly, heterotrimer of A, B and C subunits.

It carries out the reaction L-glutamyl-tRNA(Gln) + L-glutamine + ATP + H2O = L-glutaminyl-tRNA(Gln) + L-glutamate + ADP + phosphate + H(+). The enzyme catalyses L-aspartyl-tRNA(Asn) + L-glutamine + ATP + H2O = L-asparaginyl-tRNA(Asn) + L-glutamate + ADP + phosphate + 2 H(+). Its function is as follows. Allows the formation of correctly charged Asn-tRNA(Asn) or Gln-tRNA(Gln) through the transamidation of misacylated Asp-tRNA(Asn) or Glu-tRNA(Gln) in organisms which lack either or both of asparaginyl-tRNA or glutaminyl-tRNA synthetases. The reaction takes place in the presence of glutamine and ATP through an activated phospho-Asp-tRNA(Asn) or phospho-Glu-tRNA(Gln). The sequence is that of Aspartyl/glutamyl-tRNA(Asn/Gln) amidotransferase subunit C from Erythrobacter litoralis (strain HTCC2594).